The sequence spans 47 residues: uncharacterized protein (47 aa).

In terms of domain architecture, ATP-cone spans 2–47 (LRVRKRDGRLEEFSRAKIVRTCLRAGASKKIAEKVAEELKRGYTMG).

This is an uncharacterized protein from Archaeoglobus fulgidus (strain ATCC 49558 / DSM 4304 / JCM 9628 / NBRC 100126 / VC-16).